The following is a 98-amino-acid chain: Elicitin Vex1 (98 aa).

3 disulfides stabilise this stretch: cysteine 3/cysteine 71, cysteine 27/cysteine 56, and cysteine 51/cysteine 95. An N-linked (GlcNAc...) asparagine glycan is attached at asparagine 92.

This sequence belongs to the elicitin family.

The protein localises to the secreted. Its function is as follows. Induces local and distal defense responses (incompatible hypersensitive reaction) in plants from the solanaceae and cruciferae families. Elicits leaf necrosis and causes the accumulation of pathogenesis-related proteins. Might interact with the lipidic molecules of the plasma membrane. This Phytopythium vexans (Damping-off fungus) protein is Elicitin Vex1.